We begin with the raw amino-acid sequence, 890 residues long: Leucine-rich repeat receptor-like tyrosine-protein kinase PXC3 (890 aa).

An N-terminal signal peptide occupies residues 1–23; sequence MTFWCMSILLIVGFLSKSELCEA. The Extracellular segment spans residues 24 to 534; sequence QLSDEATLVA…LRYNHRVSYR (511 aa). N-linked (GlcNAc...) asparagine glycosylation is found at asparagine 46, asparagine 61, asparagine 78, and asparagine 108. LRR repeat units lie at residues 67-85, 86-108, 110-132, 133-157, 159-181, 182-205, 206-229, 231-254, 256-276, 278-300, 301-325, 326-349, 350-373, 375-397, 399-421, 422-446, 447-469, and 471-492; these read MLDL…ISDL, RSLK…SFGN, SELE…EFGK, LRGL…LKVL, RLEE…VGNL, SSLR…LGLV, SELE…IFEK, KLKV…GICS, LSSI…TIGN, SGLT…EFSK, CSNL…LGQL, INLQ…FLGS, GNLN…LCSM, RLQY…IGNC, KLLQ…IGRM, RNLQ…LGKL, DKLV…LLKG, and MSLI…VFVP. Residues asparagine 140, asparagine 171, and asparagine 180 are each glycosylated (N-linked (GlcNAc...) asparagine). Residues asparagine 276, asparagine 289, and asparagine 303 are each glycosylated (N-linked (GlcNAc...) asparagine). N-linked (GlcNAc...) asparagine glycosylation is present at asparagine 363. Residue asparagine 429 is glycosylated (N-linked (GlcNAc...) asparagine). Asparagine 477 and asparagine 498 each carry an N-linked (GlcNAc...) asparagine glycan. Residues 535-555 traverse the membrane as a helical segment; that stretch reads IVLAVIGSGVAVFVSVTVVVL. Over 556–890 the chain is Cytoplasmic; sequence LFMMREKQEK…EMLQEVKQIK (335 aa). A Protein kinase domain is found at 608-886; sequence MKESNKLSTG…KKVVEMLQEV (279 aa). ATP is bound by residues 614-622 and lysine 636; that span reads LSTGTFSSV. Aspartate 735 serves as the catalytic Proton acceptor.

Belongs to the protein kinase superfamily. Tyr protein kinase family. Expressed in the vascular strands of cotyledons, the shoot apex, hypocotyls, roots, leaves, stems and flowers.

The protein resides in the cell membrane. The catalysed reaction is L-tyrosyl-[protein] + ATP = O-phospho-L-tyrosyl-[protein] + ADP + H(+). Functionally, leucine-rich repeat receptor-like protein kinase that may play a role in vascular tissues development. This Arabidopsis thaliana (Mouse-ear cress) protein is Leucine-rich repeat receptor-like tyrosine-protein kinase PXC3.